The primary structure comprises 518 residues: RNA-binding protein FUS (518 aa).

Residues methionine 1–tyrosine 14 are compositionally biased toward polar residues. Positions methionine 1–threonine 279 are disordered. Composition is skewed to low complexity over residues glutamine 20–glutamine 63, serine 84–proline 105, and glycine 116–proline 126. Positions glutamine 127–glycine 139 are enriched in gly residues. Residues glutamine 140 to serine 166 are compositionally biased toward low complexity. Gly residues-rich tracts occupy residues serine 167–tyrosine 178 and serine 186–tyrosine 225. 2 positions are modified to asymmetric dimethylarginine; alternate: arginine 217 and arginine 219. Omega-N-methylarginine; alternate is present on residues arginine 217 and arginine 219. 5 positions are modified to asymmetric dimethylarginine: arginine 235, arginine 237, arginine 241, arginine 244, and arginine 252. A compositionally biased stretch (gly residues) spans arginine 237 to arginine 252. Residue serine 270 is modified to Phosphoserine. Positions asparagine 278 to arginine 364 constitute an RRM domain. The residue at position 279 (threonine 279) is a Phosphothreonine. Lysine 327 is covalently cross-linked (Glycyl lysine isopeptide (Lys-Gly) (interchain with G-Cter in SUMO2)). A Phosphoserine modification is found at serine 333. Disordered regions lie at residues phenylalanine 368–glycine 417 and cysteine 437–tyrosine 518. Residues arginine 370, arginine 376, arginine 379, arginine 381, and arginine 387 each carry the asymmetric dimethylarginine modification. A compositionally biased stretch (gly residues) spans arginine 370–glutamine 414. Asymmetric dimethylarginine; alternate is present on arginine 400. An Omega-N-methylarginine; alternate modification is found at arginine 400. The RanBP2-type zinc-finger motif lies at arginine 415–aspartate 446. Gly residues predominate over residues glycine 447–tyrosine 461. The span at glycine 462–glycine 485 shows a compositional bias: basic and acidic residues. Residues arginine 466, arginine 468, arginine 473, arginine 477, arginine 479, arginine 483, arginine 487, and arginine 490 each carry the asymmetric dimethylarginine modification. The span at phenylalanine 486 to proline 500 shows a compositional bias: gly residues. Position 495 is an asymmetric dimethylarginine; alternate (arginine 495). Position 495 is an omega-N-methylarginine; alternate (arginine 495). Basic and acidic residues predominate over residues methionine 503–tyrosine 518.

Belongs to the RRM TET family. As to quaternary structure, self-oligomerizes (via N-terminal region). Oligomerization is essential for chromatin binding. Component of nuclear riboprotein complexes. Interacts with ILF3, TDRD3 and SF1. Interacts through its C-terminus with SFRS13A. Interacts with OTUB1 and SARNP. Interacts with LRSAM1. Interacts with SAFB1 in a DNA-dependent manner; this interaction tethers FUS to chromatin. Interacts with MATR3. Interacts with SNRNP70 and POLR2A; these interactions couple RNA transcription and splicing. Interacts (through its RNA-binding domain) with RALY (through its RNA-binding domain); both are components of the same RNPs. In terms of processing, phosphorylated in its N-terminal serine residues upon induced DNA damage. ATM and DNA-PK are able to phosphorylate FUS N-terminal region.

The protein localises to the nucleus. Its function is as follows. DNA/RNA-binding protein that plays a role in various cellular processes such as transcription regulation, RNA splicing, RNA transport, DNA repair and damage response. Binds to ssRNA containing the consensus sequence 5'-AGGUAA-3'. Binds to nascent pre-mRNAs and acts as a molecular mediator between RNA polymerase II and U1 small nuclear ribonucleoprotein thereby coupling transcription and splicing. Also binds its own pre-mRNA and autoregulates its expression; this autoregulation mechanism is mediated by non-sense-mediated decay. Plays a role in DNA repair mechanisms by promoting D-loop formation and homologous recombination during DNA double-strand break repair. In neuronal cells, plays crucial roles in dendritic spine formation and stability, RNA transport, mRNA stability and synaptic homeostasis. This chain is RNA-binding protein FUS (Fus), found in Mus musculus (Mouse).